Here is a 202-residue protein sequence, read N- to C-terminus: Type II restriction enzyme MthZI (202 aa).

The catalysed reaction is Endonucleolytic cleavage of DNA to give specific double-stranded fragments with terminal 5'-phosphates.. Functionally, a P subtype restriction enzyme that recognizes the double-stranded sequence 5'-CTAG-3' and cleaves after C-1. This is Type II restriction enzyme MthZI from Methanothermobacter thermautotrophicus (Methanobacterium thermoformicicum).